Consider the following 91-residue polypeptide: Putative regulatory protein Helmi_20580 (91 aa).

The protein belongs to the RemA family.

The polypeptide is Putative regulatory protein Helmi_20580 (Heliobacterium modesticaldum (strain ATCC 51547 / Ice1)).